We begin with the raw amino-acid sequence, 149 residues long: Histone H3-like 1 (149 aa).

Basic and acidic residues predominate over residues 1 to 19 (MARPRKEAPQRNLDRDENA). Residues 1-58 (MARPRKEAPQRNLDRDENARQQPTEEPQDEAPRNQGRQQQQQRPPAAPRRPRRFRPGT) form a disordered region. A compositionally biased stretch (low complexity) spans 33–44 (RNQGRQQQQQRP).

Belongs to the histone H3 family. As to quaternary structure, the nucleosome is a histone octamer containing two molecules each of H2A, H2B, H3 and H4 assembled in one H3-H4 heterotetramer and two H2A-H2B heterodimers. The octamer wraps approximately 147 bp of DNA. Pollen specific.

Its subcellular location is the nucleus. The protein resides in the chromosome. Functionally, core component of nucleosome. Nucleosomes wrap and compact DNA into chromatin, limiting DNA accessibility to the cellular machineries which require DNA as a template. Histones thereby play a central role in transcription regulation, DNA repair, DNA replication and chromosomal stability. DNA accessibility is regulated via a complex set of post-translational modifications of histones, also called histone code, and nucleosome remodeling. This is Histone H3-like 1 (gH3) from Lilium longiflorum (Trumpet lily).